The following is a 544-amino-acid chain: Chaperonin GroEL (544 aa).

ATP is bound by residues 29–32 (TLGP), Lys-50, 86–90 (DGTTT), Gly-413, 479–481 (DAA), and Asp-495.

It belongs to the chaperonin (HSP60) family. As to quaternary structure, forms a cylinder of 14 subunits composed of two heptameric rings stacked back-to-back. Interacts with the co-chaperonin GroES.

It localises to the cytoplasm. The enzyme catalyses ATP + H2O + a folded polypeptide = ADP + phosphate + an unfolded polypeptide.. Its function is as follows. Together with its co-chaperonin GroES, plays an essential role in assisting protein folding. The GroEL-GroES system forms a nano-cage that allows encapsulation of the non-native substrate proteins and provides a physical environment optimized to promote and accelerate protein folding. In Borrelia duttonii (strain Ly), this protein is Chaperonin GroEL.